A 975-amino-acid polypeptide reads, in one-letter code: MKHEHPDRLMNRTPLSLAALETHDAFAERHIGPDAASQQAMLDTLGFASRAALIDAVIPASIRRAEALPLGPFAQPKSEAEALAALRALADKNQVFRSYIGQGYYDSHTPAVILRNVLENPAWYTAYTPYQPEISQGRLEALLNFQQMVVDLTGLAISNASLLDEATAAAEAMTLLQRTGKPKSNVFYVADDVLPQTLEVVRTRALPIGIEVKTGPAAEAAQAGAFGVLLQYPGVNGDVRDYRALTDAIHAAGGHVVVAADLLALTVLTPPGEWGADVAVGNTQRFGVPMGFGGPHAAYMAVRDEFKRQMPGRLVGVTVDAQGKPALRLALQTREQHIRREKATSNVCTAQALLAIMASMYAVYHGPHGLKTIALRVNRIAALLAAGVKQLGFTTVNDTFFDTLTIDAGARTAQLHAFANAKRINLRRVSDTQVGVSVDETTTRDDLADLLAVFAQAAGGTAPDVDALDAGLPGVAALPAGLERTSAYLTHHVFNRHHSETEMLRYLRSLSDKDLALDRSMIPLGSCTMKLNATSEMLPVTWPEFGRIHPFAPSEQTAGYREMIDQLEQMLVAATGYAAVSLQPNAGSQGEYAGLLVIHAYHASRGEAHRDVCLIPASAHGTNPASAHMAGMKVVVVACDAQGNVDIADLKAKAEQHANDLAAIMITYPSTHGVFEQNVREICEIVHAHGGQVYVDGANMNAMVGLTAPGQFGGDVSHLNLHKTFCIPHGGGGPGVGPVAVGPHLAKFLPNQRSTGYARGEEGIGAVSAAPYGSASILPISWMYIAMMGAKNLTAATETAILNANYIAKRLAPHYPVLYSGPGGLVAHECILDLRPIKETSGITVDDVAKRLMDYGFHAPTMSFPVPGTLMVEPTESESQEELDRFIAAMIAIREEIRAVEEGRADREDNPLRHAPHTAAVVTANEWPHAYSREQAAYPVASLVTNKYWPPVGRADNAYGDRNLFCSCVPMSEYA.

Position 723 is an N6-(pyridoxal phosphate)lysine (Lys723).

Belongs to the GcvP family. As to quaternary structure, the glycine cleavage system is composed of four proteins: P, T, L and H. The cofactor is pyridoxal 5'-phosphate.

It catalyses the reaction N(6)-[(R)-lipoyl]-L-lysyl-[glycine-cleavage complex H protein] + glycine + H(+) = N(6)-[(R)-S(8)-aminomethyldihydrolipoyl]-L-lysyl-[glycine-cleavage complex H protein] + CO2. Functionally, the glycine cleavage system catalyzes the degradation of glycine. The P protein binds the alpha-amino group of glycine through its pyridoxal phosphate cofactor; CO(2) is released and the remaining methylamine moiety is then transferred to the lipoamide cofactor of the H protein. This Burkholderia vietnamiensis (strain G4 / LMG 22486) (Burkholderia cepacia (strain R1808)) protein is Glycine dehydrogenase (decarboxylating).